Consider the following 918-residue polypeptide: Exostosin-like 3 (918 aa).

The Cytoplasmic segment spans residues 1–30 (MTGYTMLRNGGVGNGGQTCMLRWSNRIRLT). Residues 1-140 (MTGYTMLRNG…LKNVISQTEH (140 aa)) form a required for interaction with REG3A region. A helical; Signal-anchor for type II membrane protein transmembrane segment spans residues 31 to 51 (WLSFTLFIILVFFPLIAHYYL). The Lumenal segment spans residues 52–918 (TTLDEADEAG…HDKTKCFKFI (867 aa)). Intrachain disulfides connect cysteine 177-cysteine 182 and cysteine 188-cysteine 236. A glycan (N-linked (GlcNAc...) asparagine) is linked at asparagine 290. A Phosphoserine modification is found at serine 361. A disulfide bond links cysteine 399 and cysteine 414. A glycan (N-linked (GlcNAc...) asparagine) is linked at asparagine 591. UDP-N-acetyl-alpha-D-glucosamine contacts are provided by leucine 667, arginine 671, asparagine 696, asparagine 722, arginine 727, aspartate 743, aspartate 744, and aspartate 745. Aspartate 745 lines the Mn(2+) pocket. N-linked (GlcNAc...) asparagine glycosylation is present at asparagine 789. Cysteine 830 and cysteine 878 are disulfide-bonded. UDP-N-acetyl-alpha-D-glucosamine is bound by residues glutamate 831, aspartate 832, and arginine 875. Residue aspartate 832 is part of the active site.

This sequence belongs to the glycosyltransferase 47 family. Homodimer; disulfide-linked. Interacts with REG3A. It depends on Mn(2+) as a cofactor. Expressed in pancreatic islet beta-cells. Expressed in lung epithelial cells. Expressed in microglia.

Its subcellular location is the endoplasmic reticulum membrane. It localises to the golgi apparatus. The protein resides in the cell membrane. The protein localises to the nucleus. It catalyses the reaction 3-O-(beta-D-GlcA-(1-&gt;3)-beta-D-Gal-(1-&gt;3)-beta-D-Gal-(1-&gt;4)-beta-D-Xyl)-L-seryl-[protein] + UDP-N-acetyl-alpha-D-glucosamine = 3-O-(alpha-D-GlcNAc-(1-&gt;4)-beta-D-GlcA-(1-&gt;3)-beta-D-Gal-(1-&gt;3)-beta-D-Gal-(1-&gt;4)-beta-D-Xyl)-L-seryl-[protein] + UDP + H(+). It functions in the pathway glycan metabolism; heparan sulfate biosynthesis. In terms of biological role, glycosyltransferase which regulates the biosynthesis of heparan sulfate (HS). Initiates HS synthesis by transferring the first N-acetyl-alpha-D-glucosamine (alpha-GlcNAc) residue (GlcNAcT-I activity) to the tetrasaccharide linker (GlcA-Gal-Gal-Xyl-)Ser core linker. May also transfer alpha-GlcNAc residues during HS elongation (GlcNAcT-II activity). Lacks glucuronyl transferase II (GlcAT-II) activity. Important for both skeletal development and hematopoiesis, through the formation of HS proteoglycans (HSPGs). Through the synthesis of HS, regulates postnatal pancreatic islet maturation and insulin secretion. Its function is as follows. Receptor for REG3A, REG3B and REG3G, induces the activation of downstream signaling pathways such as PI3K-AKT or RAS-RAF-MEK-ERK signaling pathway. Required for the function of REG3A in regulating keratinocyte proliferation and differentiation. Required for the inhibition of skin inflammation mediated by REG3A through the activation of PI3K-AKT-STAT3 pathway. Required for the function of REG3A and REG3G in glucose tolerance in pancreas. Expressed in microglia, is activated by nociceptor-derived REG3G in response to endotoxins, leading to the inhibition of kynurenine pathway to prevent endotoxic death. This is Exostosin-like 3 from Mus musculus (Mouse).